The primary structure comprises 157 residues: Transcription elongation factor GreA (157 aa).

A coiled-coil region spans residues 14–37; that stretch reads LREELDRLLKLRPKITEAIAEARE.

This sequence belongs to the GreA/GreB family.

In terms of biological role, necessary for efficient RNA polymerase transcription elongation past template-encoded arresting sites. The arresting sites in DNA have the property of trapping a certain fraction of elongating RNA polymerases that pass through, resulting in locked ternary complexes. Cleavage of the nascent transcript by cleavage factors such as GreA or GreB allows the resumption of elongation from the new 3'terminus. GreA releases sequences of 2 to 3 nucleotides. The polypeptide is Transcription elongation factor GreA (Vibrio cholerae serotype O1 (strain ATCC 39315 / El Tor Inaba N16961)).